We begin with the raw amino-acid sequence, 749 residues long: Protein lin-54 homolog (749 aa).

K139 is covalently cross-linked (Glycyl lysine isopeptide (Lys-Gly) (interchain with G-Cter in SUMO2)). N6-acetyllysine occurs at positions 244 and 249. 4 positions are modified to phosphoserine: S264, S282, S310, and S314. K357 participates in a covalent cross-link: Glycyl lysine isopeptide (Lys-Gly) (interchain with G-Cter in SUMO2). The disordered stretch occupies residues 369–388 (ASSSTQPVSQNPSTNTQPLQ). A CRC domain is found at 521-634 (PRKPCNCTKS…KCIGCKNFEE (114 aa)). The segment at 523-536 (KPCNCTKSLCLKLY) is DNA-binding. Residues C525, C527, C532, C537, C539, C546, C549, C551, and C554 each coordinate Zn(2+). The interval 583–596 (IGKGKEGESDRRHS) is linker. Zn(2+) is bound by residues C599, C601, C606, C611, C613, C620, C624, C626, and C629. Residues 599–612 (CNCKRSGCLKNYCE) form a DNA-binding region. At S635 the chain carries Phosphoserine. Glycyl lysine isopeptide (Lys-Gly) (interchain with G-Cter in SUMO2) cross-links involve residues K639, K659, and K661.

It belongs to the lin-54 family. In terms of assembly, component of the DREAM complex (also named LINC complex) at least composed of E2F4, E2F5, LIN9, LIN37, LIN52, LIN54, MYBL1, MYBL2, RBL1, RBL2, RBBP4, TFDP1 and TFDP2. The complex exists in quiescent cells where it represses cell cycle-dependent genes. It dissociates in S phase when LIN9, LIN37, LIN52 and LIN54 form a subcomplex that binds to MYBL2.

Its subcellular location is the nucleus. Its function is as follows. Component of the DREAM complex, a multiprotein complex that can both act as a transcription activator or repressor depending on the context. In G0 phase, the complex binds to more than 800 promoters and is required for repression of E2F target genes. In S phase, the complex selectively binds to the promoters of G2/M genes whose products are required for mitosis and participates in their cell cycle dependent activation. In the complex, acts as a DNA-binding protein that binds the promoter of CDK1 in a sequence-specific manner. Specifically recognizes the consensus motif 5'-TTYRAA-3' in target DNA. The protein is Protein lin-54 homolog (LIN54) of Homo sapiens (Human).